The primary structure comprises 288 residues: Store-operated calcium entry regulator STIMATE (288 aa).

Residues 1 to 28 (MQGPGGNVSRGLPGGPASTVASGAGRCE) lie on the Cytoplasmic side of the membrane. The next 3 membrane-spanning stretches (helical) occupy residues 29-49 (SGALMHSFGIFLQGLLGVVAF), 69-89 (IWFLDTSKQAIGMLFIHFANV), and 102-122 (LYLINFLLDATVGMLLIYVGV). Residues 149-153 (GAWVG) carry the GXXXG motif motif. Transmembrane regions (helical) follow at residues 156 to 176 (ALYIVIMIFEKSVVFIVLLIL) and 194 to 214 (LAIVMLIVPFFVNAFMFWVVD). The Cytoplasmic segment spans residues 215–288 (NFLMRKGKTK…KKKHRFGLPV (74 aa)). The disordered stretch occupies residues 228 to 288 (EERGANQDSR…KKKHRFGLPV (61 aa)). Residues 241–246 (KVRYRR) form a required for localization in the endoplasmic reticulum region. Over residues 261–272 (ADDEMEESDAEE) the composition is skewed to acidic residues. A compositionally biased stretch (basic residues) spans 277–288 (PVKKKHRFGLPV).

The protein belongs to the STIMATE family. Homooligomer. Interacts with STIM1.

It localises to the endoplasmic reticulum membrane. Its function is as follows. Acts as a regulator of store-operated Ca(2+) entry (SOCE) at junctional sites that connect the endoplasmic reticulum (ER) and plasma membrane (PM), called ER-plasma membrane (ER-PM) junction or cortical ER. SOCE is a Ca(2+) influx following depletion of intracellular Ca(2+) stores. Acts by interacting with STIM1, promoting STIM1 conformational switch. Involved in STIM1 relocalization to ER-PM junctions. Contributes to the maintenance and reorganization of store-dependent ER-PM junctions. In Rattus norvegicus (Rat), this protein is Store-operated calcium entry regulator STIMATE.